The primary structure comprises 517 residues: Sphingolipid C9-methyltransferase A (517 aa).

2 helical membrane-spanning segments follow: residues 58–78 (LLIL…GGGL) and 80–100 (TTIF…WSIA). Residues 223–224 (YT), 286–291 (TLGRNQ), and 316–317 (YR) contribute to the S-adenosyl-L-methionine site. A glycan (N-linked (GlcNAc...) asparagine) is linked at asparagine 290. Residue asparagine 478 is glycosylated (N-linked (GlcNAc...) asparagine).

The protein belongs to the CFA/CMAS family.

It is found in the membrane. It carries out the reaction a (4E,8E)-4-sphinga-4,8-dienine ceramide + S-adenosyl-L-methionine = a 9-methyl-(4E,8E)-sphinga-4,8-dienine ceramide + S-adenosyl-L-homocysteine + H(+). The protein operates within lipid metabolism; sphingolipid metabolism. Functionally, catalyzes methylation of the sphingoid base component of glucosylceramides (GluCers) at the C9-position. Sphingolipid C9-methylation requires 4,8-desaturated ceramides as substrates. Glucosylceramides play important roles in growth, differentiation and pathogenicity. The methyl group at the C9-position distinguishes fungal glucosylceramides from those of plants and animals and may thus play a role in host-pathogen interactions enabling the host to recognize the fungal attack and initiate specific defense responses. This chain is Sphingolipid C9-methyltransferase A, found in Emericella nidulans (strain FGSC A4 / ATCC 38163 / CBS 112.46 / NRRL 194 / M139) (Aspergillus nidulans).